A 38-amino-acid chain; its full sequence is Photosystem II reaction center protein M (38 aa).

A helical transmembrane segment spans residues 7-27 (GFVASILFVLVPSVFLIILYI).

This sequence belongs to the PsbM family. PSII is composed of 1 copy each of membrane proteins PsbA, PsbB, PsbC, PsbD, PsbE, PsbF, PsbH, PsbI, PsbJ, PsbK, PsbL, PsbM, PsbT, PsbX, PsbY, PsbZ, Psb30/Ycf12, peripheral proteins PsbO, CyanoQ (PsbQ), PsbU, PsbV and a large number of cofactors. It forms dimeric complexes.

The protein localises to the cellular thylakoid membrane. Functionally, one of the components of the core complex of photosystem II (PSII). PSII is a light-driven water:plastoquinone oxidoreductase that uses light energy to abstract electrons from H(2)O, generating O(2) and a proton gradient subsequently used for ATP formation. It consists of a core antenna complex that captures photons, and an electron transfer chain that converts photonic excitation into a charge separation. This subunit is found at the monomer-monomer interface. The sequence is that of Photosystem II reaction center protein M from Nostoc sp. (strain PCC 7120 / SAG 25.82 / UTEX 2576).